A 617-amino-acid chain; its full sequence is Tetratricopeptide repeat protein 39B (617 aa).

TPR repeat units follow at residues Ser-328 to Trp-361 and Pro-561 to Tyr-594.

The protein belongs to the TTC39 family.

Its function is as follows. Regulates high density lipoprotein (HDL) cholesterol metabolism by promoting the ubiquitination and degradation of the oxysterols receptors LXR (NR1H2 and NR1H3). In Rattus norvegicus (Rat), this protein is Tetratricopeptide repeat protein 39B (Ttc39b).